Reading from the N-terminus, the 110-residue chain is Insulin-2 (110 aa).

Positions 1–24 (MALWIRFLPLLALLILWEPRPAQA) are cleaved as a signal peptide. Cystine bridges form between Cys31-Cys96, Cys43-Cys109, and Cys95-Cys100. The propeptide at 57-87 (EVEDPQVAQLELGGGPGAGDLQTLALEVARQ) is c peptide.

This sequence belongs to the insulin family. As to quaternary structure, heterodimer of a B chain and an A chain linked by two disulfide bonds.

The protein resides in the secreted. Functionally, insulin decreases blood glucose concentration. It increases cell permeability to monosaccharides, amino acids and fatty acids. It accelerates glycolysis, the pentose phosphate cycle, and glycogen synthesis in liver. The polypeptide is Insulin-2 (Ins2) (Rattus norvegicus (Rat)).